The primary structure comprises 388 residues: Xylose isomerase (388 aa).

Residues H54 and D57 contribute to the active site. Positions 181, 217, 220, 245, 255, 257, and 287 each coordinate Mg(2+).

Belongs to the xylose isomerase family. As to quaternary structure, homotetramer. It depends on Mg(2+) as a cofactor.

It localises to the cytoplasm. It catalyses the reaction alpha-D-xylose = alpha-D-xylulofuranose. Functionally, involved in D-xylose catabolism. The sequence is that of Xylose isomerase (xylA) from Streptomyces rubiginosus.